Reading from the N-terminus, the 156-residue chain is Small ribosomal subunit protein uS7 (156 aa).

It belongs to the universal ribosomal protein uS7 family. Part of the 30S ribosomal subunit. Contacts proteins S9 and S11.

One of the primary rRNA binding proteins, it binds directly to 16S rRNA where it nucleates assembly of the head domain of the 30S subunit. Is located at the subunit interface close to the decoding center, probably blocks exit of the E-site tRNA. This chain is Small ribosomal subunit protein uS7, found in Vibrio parahaemolyticus serotype O3:K6 (strain RIMD 2210633).